A 150-amino-acid polypeptide reads, in one-letter code: Large ribosomal subunit protein bL9 (150 aa).

The protein belongs to the bacterial ribosomal protein bL9 family.

Functionally, binds to the 23S rRNA. The sequence is that of Large ribosomal subunit protein bL9 from Limosilactobacillus fermentum (strain NBRC 3956 / LMG 18251) (Lactobacillus fermentum).